The sequence spans 633 residues: Phosphomethylpyrimidine synthase (633 aa).

Polar residues predominate over residues 1–13 (MNIRSNPDTTLPA). Residues 1–20 (MNIRSNPDTTLPAVTTGPLP) form a disordered region. Substrate is bound by residues Asn-221, Met-250, Tyr-279, His-315, 335 to 337 (SRG), 376 to 379 (DGLR), and Glu-415. His-419 is a binding site for Zn(2+). Residue Tyr-442 participates in substrate binding. Residue His-483 coordinates Zn(2+). Residues Cys-563, Cys-566, and Cys-571 each contribute to the [4Fe-4S] cluster site.

This sequence belongs to the ThiC family. As to quaternary structure, homodimer. The cofactor is [4Fe-4S] cluster.

It catalyses the reaction 5-amino-1-(5-phospho-beta-D-ribosyl)imidazole + S-adenosyl-L-methionine = 4-amino-2-methyl-5-(phosphooxymethyl)pyrimidine + CO + 5'-deoxyadenosine + formate + L-methionine + 3 H(+). It participates in cofactor biosynthesis; thiamine diphosphate biosynthesis. Functionally, catalyzes the synthesis of the hydroxymethylpyrimidine phosphate (HMP-P) moiety of thiamine from aminoimidazole ribotide (AIR) in a radical S-adenosyl-L-methionine (SAM)-dependent reaction. This is Phosphomethylpyrimidine synthase from Bradyrhizobium sp. (strain ORS 278).